Consider the following 360-residue polypeptide: MQTLHVELGERRYPIFIGSQLDPKQLLEPYIHGQQVMIVSNVTVAPLYLSHYQEALESLGKTVATCILPDGEKYKDIQHLNLIFDALLEAGFNRDCTVLALGGGVIGDMAGFASACFQRGVYFVQVPTTLLSQVDSSVGGKTGINHPLGKNMLGAFQQPQVVLADMAQLNTLPERELSAGLAEVIKYALLGDEDFLVWLEENMDGLVARDADLLAEAVYRSCAHKARIVANDEKEQGERALLNLGHTFGHAIESYLGYGTWLHGEAVATGMVMAADLSQRLGWISNEDVARTKKIIQRANLPISCPQIPLDDFLGYMAHDKKVLNGQLRLVLLKQLGQAVITKDFDVELMKQAILANQHG.

Residues 70 to 75, 104 to 108, 128 to 129, Lys141, and Lys150 contribute to the NAD(+) site; these read DGEKYK, GVIGD, and TT. Zn(2+) is bound by residues Glu183, His246, and His263.

It belongs to the sugar phosphate cyclases superfamily. Dehydroquinate synthase family. It depends on Co(2+) as a cofactor. The cofactor is Zn(2+). NAD(+) serves as cofactor.

It is found in the cytoplasm. It carries out the reaction 7-phospho-2-dehydro-3-deoxy-D-arabino-heptonate = 3-dehydroquinate + phosphate. It participates in metabolic intermediate biosynthesis; chorismate biosynthesis; chorismate from D-erythrose 4-phosphate and phosphoenolpyruvate: step 2/7. Catalyzes the conversion of 3-deoxy-D-arabino-heptulosonate 7-phosphate (DAHP) to dehydroquinate (DHQ). The protein is 3-dehydroquinate synthase of Acinetobacter baumannii (strain AYE).